Consider the following 348-residue polypeptide: Putative [LysW]-L-2-aminoadipate/[LysW]-L-glutamate phosphate reductase (348 aa).

9–12 (SGYV) provides a ligand contact to NADP(+). Residue C149 is part of the active site. N315 provides a ligand contact to NADP(+).

Belongs to the NAGSA dehydrogenase family. Type 1 subfamily. LysY sub-subfamily.

It localises to the cytoplasm. It catalyses the reaction [amino-group carrier protein]-C-terminal-N-(1-carboxy-5-oxopentan-1-yl)-L-glutamine + phosphate + NADP(+) = [amino-group carrier protein]-C-terminal-N-(1-carboxy-5-phosphooxy-5-oxopentan-1-yl)-L-glutamine + NADPH + H(+). The enzyme catalyses [amino-group carrier protein]-C-terminal-gamma-(L-glutamyl-5-semialdehyde)-L-glutamate + phosphate + NADP(+) = [amino-group carrier protein]-C-terminal-gamma-(5-phospho-L-glutamyl)-L-glutamate + NADPH + H(+). It participates in amino-acid biosynthesis; L-lysine biosynthesis via AAA pathway; L-lysine from L-alpha-aminoadipate (Thermus route): step 3/5. Its pathway is amino-acid biosynthesis; L-arginine biosynthesis. Its function is as follows. Involved in both the arginine and lysine biosynthetic pathways. The sequence is that of Putative [LysW]-L-2-aminoadipate/[LysW]-L-glutamate phosphate reductase from Nitrosopumilus maritimus (strain SCM1).